The chain runs to 560 residues: SWI/SNF complex subunit SWI3A homolog (560 aa).

The segment covering 1–13 (MSPPVAGAASSGD) has biased composition (low complexity). Positions 1–22 (MSPPVAGAASSGDGPPGRPPRE) are disordered. Residues 24–127 (YTIPASSGWF…FSASPSRPEA (104 aa)) form the SWIRM domain. An SANT domain is found at 242-293 (HSSSAWTDAETLLLLEGVLKHGDDWDLIAQHVRTKNKSECIARLIQLPFGEH). Residues 311–330 (TTDGKVNKSTVKESSSQPTE) show a composition bias toward polar residues. Disordered regions lie at residues 311 to 352 (TTDG…EEHP) and 414 to 445 (QTRAFSSNHARQSDDVGGGDRDVEMHGHPDKK). The span at 331–342 (TVDDMQIDGNED) shows a compositional bias: acidic residues. Basic and acidic residues-rich tracts occupy residues 343–352 (GADKSVEEHP) and 424–445 (RQSDDVGGGDRDVEMHGHPDKK).

Interacts with LFR.

The protein resides in the nucleus. Component of a multiprotein complex equivalent of the SWI/SNF complex, an ATP-dependent chromatin-remodeling complex, which is required for the positive and negative regulation of gene expression of a large number of genes. It changes chromatin structure by altering DNA-histone contacts within a nucleosome, leading eventually to a change in nucleosome position, thus facilitating or repressing binding of gene-specific transcription factors. This Oryza sativa subsp. japonica (Rice) protein is SWI/SNF complex subunit SWI3A homolog.